The chain runs to 87 residues: Small ribosomal subunit protein uS15 (87 aa).

Belongs to the universal ribosomal protein uS15 family. Part of the 30S ribosomal subunit. Forms a bridge to the 50S subunit in the 70S ribosome, contacting the 23S rRNA.

Its function is as follows. One of the primary rRNA binding proteins, it binds directly to 16S rRNA where it helps nucleate assembly of the platform of the 30S subunit by binding and bridging several RNA helices of the 16S rRNA. In terms of biological role, forms an intersubunit bridge (bridge B4) with the 23S rRNA of the 50S subunit in the ribosome. This Clostridium beijerinckii (strain ATCC 51743 / NCIMB 8052) (Clostridium acetobutylicum) protein is Small ribosomal subunit protein uS15.